Here is a 337-residue protein sequence, read N- to C-terminus: Holliday junction branch migration complex subunit RuvB (337 aa).

A large ATPase domain (RuvB-L) region spans residues 4–184; the sequence is ADRLIAPAAI…FGIVQRLEFY (181 aa). Residues Ile23, Arg24, Gly65, Lys68, Thr69, Thr70, 131–133, Arg174, Tyr184, and Arg221 contribute to the ATP site; that span reads EDY. Thr69 contributes to the Mg(2+) binding site. Residues 185-255 form a small ATPAse domain (RuvB-S) region; the sequence is KVEDLAHIVG…IAAQALDMLD (71 aa). The segment at 258–337 is head domain (RuvB-H); that stretch reads NAGFDYMDRK…FGLTTPERQG (80 aa). 2 residues coordinate DNA: Arg313 and Arg318.

Belongs to the RuvB family. Homohexamer. Forms an RuvA(8)-RuvB(12)-Holliday junction (HJ) complex. HJ DNA is sandwiched between 2 RuvA tetramers; dsDNA enters through RuvA and exits via RuvB. An RuvB hexamer assembles on each DNA strand where it exits the tetramer. Each RuvB hexamer is contacted by two RuvA subunits (via domain III) on 2 adjacent RuvB subunits; this complex drives branch migration. In the full resolvosome a probable DNA-RuvA(4)-RuvB(12)-RuvC(2) complex forms which resolves the HJ.

Its subcellular location is the cytoplasm. It carries out the reaction ATP + H2O = ADP + phosphate + H(+). In terms of biological role, the RuvA-RuvB-RuvC complex processes Holliday junction (HJ) DNA during genetic recombination and DNA repair, while the RuvA-RuvB complex plays an important role in the rescue of blocked DNA replication forks via replication fork reversal (RFR). RuvA specifically binds to HJ cruciform DNA, conferring on it an open structure. The RuvB hexamer acts as an ATP-dependent pump, pulling dsDNA into and through the RuvAB complex. RuvB forms 2 homohexamers on either side of HJ DNA bound by 1 or 2 RuvA tetramers; 4 subunits per hexamer contact DNA at a time. Coordinated motions by a converter formed by DNA-disengaged RuvB subunits stimulates ATP hydrolysis and nucleotide exchange. Immobilization of the converter enables RuvB to convert the ATP-contained energy into a lever motion, pulling 2 nucleotides of DNA out of the RuvA tetramer per ATP hydrolyzed, thus driving DNA branch migration. The RuvB motors rotate together with the DNA substrate, which together with the progressing nucleotide cycle form the mechanistic basis for DNA recombination by continuous HJ branch migration. Branch migration allows RuvC to scan DNA until it finds its consensus sequence, where it cleaves and resolves cruciform DNA. The polypeptide is Holliday junction branch migration complex subunit RuvB (Tolumonas auensis (strain DSM 9187 / NBRC 110442 / TA 4)).